Reading from the N-terminus, the 179-residue chain is Cytochrome b6-f complex iron-sulfur subunit (179 aa).

A helical membrane pass occupies residues Leu-21 to Ile-43. Residues Gly-61–Leu-162 enclose the Rieske domain. [2Fe-2S] cluster is bound by residues Cys-108, His-110, Cys-126, and His-129. Residues Cys-113 and Cys-128 are joined by a disulfide bond.

This sequence belongs to the Rieske iron-sulfur protein family. In terms of assembly, the 4 large subunits of the cytochrome b6-f complex are cytochrome b6, subunit IV (17 kDa polypeptide, PetD), cytochrome f and the Rieske protein, while the 4 small subunits are PetG, PetL, PetM and PetN. The complex functions as a dimer. [2Fe-2S] cluster is required as a cofactor.

Its subcellular location is the cellular thylakoid membrane. It catalyses the reaction 2 oxidized [plastocyanin] + a plastoquinol + 2 H(+)(in) = 2 reduced [plastocyanin] + a plastoquinone + 4 H(+)(out). In terms of biological role, component of the cytochrome b6-f complex, which mediates electron transfer between photosystem II (PSII) and photosystem I (PSI), cyclic electron flow around PSI, and state transitions. This is Cytochrome b6-f complex iron-sulfur subunit from Nostoc punctiforme (strain ATCC 29133 / PCC 73102).